The primary structure comprises 562 residues: Putative transport protein NT01EI_2530 (562 aa).

A run of 6 helical transmembrane segments spans residues leucine 8–glycine 28, leucine 32–glutamine 52, phenylalanine 66–phenylalanine 86, methionine 94–phenylalanine 114, isoleucine 118–alanine 138, and histidine 158–alanine 178. RCK C-terminal domains are found at residues leucine 202–asparagine 288 and lysine 290–phenylalanine 373. The next 5 membrane-spanning stretches (helical) occupy residues leucine 383–phenylalanine 403, phenylalanine 406–leucine 426, methionine 443–glycine 463, isoleucine 477–valine 497, and isoleucine 541–valine 561.

Belongs to the AAE transporter (TC 2.A.81) family. YbjL subfamily.

Its subcellular location is the cell membrane. This Edwardsiella ictaluri (strain 93-146) protein is Putative transport protein NT01EI_2530.